The following is a 395-amino-acid chain: L-methionine gamma-lyase (395 aa).

Pyridoxal 5'-phosphate-binding positions include 56-58 (YTR) and 86-87 (GM). Residue Tyr-111 participates in substrate binding. Residue 206-208 (SVT) coordinates pyridoxal 5'-phosphate. An N6-(pyridoxal phosphate)lysine modification is found at Lys-209. Position 373 (Arg-373) interacts with substrate.

The protein belongs to the trans-sulfuration enzymes family. L-methionine gamma-lyase subfamily. In terms of assembly, homotetramer. The cofactor is pyridoxal 5'-phosphate.

The catalysed reaction is L-methionine + H2O = methanethiol + 2-oxobutanoate + NH4(+). The enzyme catalyses L-homocysteine + H2O = 2-oxobutanoate + hydrogen sulfide + NH4(+) + H(+). Catalyzes the alpha,gamma-elimination of L-methionine to produce methanethiol, 2-oxobutanoate and ammonia; methanethiol (methyl mercaptan) is considered to be one of the main causes of the oral malodor associated with periodontitis. Also displays homocysteine desulfhydrase activity, degrading homocysteine to produce hydrogen sulfide, 2-oxobutanoate and ammonia. L-cysteine and S-methyl-L-cysteine are poor substrates for the enzyme. Its function is as follows. Plays an important role in the resistance of F.nucleatum to the antibacterial agent 3-chloro-DL-alanine (3CA), thanks to its 3CA chloride-lyase (deaminating) activity. This is L-methionine gamma-lyase from Fusobacterium nucleatum subsp. polymorphum (Fusobacterium polymorphum).